Consider the following 264-residue polypeptide: tRNA pseudouridine synthase A (264 aa).

Residue aspartate 51 is the Nucleophile of the active site. Tyrosine 109 lines the substrate pocket.

It belongs to the tRNA pseudouridine synthase TruA family. In terms of assembly, homodimer.

It catalyses the reaction uridine(38/39/40) in tRNA = pseudouridine(38/39/40) in tRNA. Functionally, formation of pseudouridine at positions 38, 39 and 40 in the anticodon stem and loop of transfer RNAs. In Vibrio parahaemolyticus serotype O3:K6 (strain RIMD 2210633), this protein is tRNA pseudouridine synthase A.